The sequence spans 387 residues: Carbamoyl phosphate synthase small chain (387 aa).

Residues 1–189 (MIKSAILVLE…GLPEDKQEQD (189 aa)) are CPSase. 3 residues coordinate L-glutamine: S47, G241, and G243. Positions 193-380 (HVVAYDFGAK…IELIEQYCQK (188 aa)) constitute a Glutamine amidotransferase type-1 domain. Residue C269 is the Nucleophile of the active site. L-glutamine contacts are provided by L270, Q273, N311, G313, and F314. Residues H353 and E355 contribute to the active site.

Belongs to the CarA family. As to quaternary structure, composed of two chains; the small (or glutamine) chain promotes the hydrolysis of glutamine to ammonia, which is used by the large (or ammonia) chain to synthesize carbamoyl phosphate. Tetramer of heterodimers (alpha,beta)4.

It carries out the reaction hydrogencarbonate + L-glutamine + 2 ATP + H2O = carbamoyl phosphate + L-glutamate + 2 ADP + phosphate + 2 H(+). The enzyme catalyses L-glutamine + H2O = L-glutamate + NH4(+). The protein operates within amino-acid biosynthesis; L-arginine biosynthesis; carbamoyl phosphate from bicarbonate: step 1/1. It participates in pyrimidine metabolism; UMP biosynthesis via de novo pathway; (S)-dihydroorotate from bicarbonate: step 1/3. Its function is as follows. Small subunit of the glutamine-dependent carbamoyl phosphate synthetase (CPSase). CPSase catalyzes the formation of carbamoyl phosphate from the ammonia moiety of glutamine, carbonate, and phosphate donated by ATP, constituting the first step of 2 biosynthetic pathways, one leading to arginine and/or urea and the other to pyrimidine nucleotides. The small subunit (glutamine amidotransferase) binds and cleaves glutamine to supply the large subunit with the substrate ammonia. The sequence is that of Carbamoyl phosphate synthase small chain from Photorhabdus laumondii subsp. laumondii (strain DSM 15139 / CIP 105565 / TT01) (Photorhabdus luminescens subsp. laumondii).